A 154-amino-acid chain; its full sequence is Peptide methionine sulfoxide reductase MsrB (154 aa).

Positions 28–150 (DQQWREQLSE…NSVSLIFNKI (123 aa)) constitute a MsrB domain. Residues Cys67, Cys70, Cys116, and Cys119 each coordinate Zn(2+). Cys139 serves as the catalytic Nucleophile.

This sequence belongs to the MsrB Met sulfoxide reductase family. The cofactor is Zn(2+).

It carries out the reaction L-methionyl-[protein] + [thioredoxin]-disulfide + H2O = L-methionyl-(R)-S-oxide-[protein] + [thioredoxin]-dithiol. The polypeptide is Peptide methionine sulfoxide reductase MsrB (Vibrio vulnificus (strain YJ016)).